Consider the following 568-residue polypeptide: Oxygen-dependent choline dehydrogenase (568 aa).

8–37 (DYIIIGAGSAGNTLAARLTEDAGVTVLLLE) lines the FAD pocket. The active-site Proton acceptor is the H477.

It belongs to the GMC oxidoreductase family. Requires FAD as cofactor.

It carries out the reaction choline + A = betaine aldehyde + AH2. It catalyses the reaction betaine aldehyde + NAD(+) + H2O = glycine betaine + NADH + 2 H(+). It participates in amine and polyamine biosynthesis; betaine biosynthesis via choline pathway; betaine aldehyde from choline (cytochrome c reductase route): step 1/1. In terms of biological role, involved in the biosynthesis of the osmoprotectant glycine betaine. Catalyzes the oxidation of choline to betaine aldehyde and betaine aldehyde to glycine betaine at the same rate. This Pseudomonas syringae pv. syringae (strain B728a) protein is Oxygen-dependent choline dehydrogenase.